The following is a 244-amino-acid chain: Ubiquinone biosynthesis O-methyltransferase (244 aa).

S-adenosyl-L-methionine-binding residues include Arg-36, Gly-60, Asp-81, and Leu-123.

This sequence belongs to the methyltransferase superfamily. UbiG/COQ3 family.

It carries out the reaction a 3-demethylubiquinol + S-adenosyl-L-methionine = a ubiquinol + S-adenosyl-L-homocysteine + H(+). The catalysed reaction is a 3-(all-trans-polyprenyl)benzene-1,2-diol + S-adenosyl-L-methionine = a 2-methoxy-6-(all-trans-polyprenyl)phenol + S-adenosyl-L-homocysteine + H(+). The protein operates within cofactor biosynthesis; ubiquinone biosynthesis. In terms of biological role, O-methyltransferase that catalyzes the 2 O-methylation steps in the ubiquinone biosynthetic pathway. The polypeptide is Ubiquinone biosynthesis O-methyltransferase (Rickettsia felis (strain ATCC VR-1525 / URRWXCal2) (Rickettsia azadi)).